We begin with the raw amino-acid sequence, 411 residues long: Arginine deiminase (411 aa).

C401 functions as the Amidino-cysteine intermediate in the catalytic mechanism.

Belongs to the arginine deiminase family.

The protein localises to the cytoplasm. The enzyme catalyses L-arginine + H2O = L-citrulline + NH4(+). It functions in the pathway amino-acid degradation; L-arginine degradation via ADI pathway; carbamoyl phosphate from L-arginine: step 1/2. In Streptococcus equi subsp. zooepidemicus (strain MGCS10565), this protein is Arginine deiminase.